The chain runs to 683 residues: C-mannosyltransferase dpy-19 (683 aa).

11 helical membrane-spanning segments follow: residues Ser21–Ile41, Ile167–Leu187, Val188–Glu208, Glu220–Tyr240, Phe267–Phe287, Ile298–Leu318, Tyr319–Leu339, Ala344–Leu364, Cys413–Val433, Phe467–Phe487, and Ile502–Ile522.

The protein belongs to the dpy-19 family. In terms of tissue distribution, expressed faintly in neuroblasts QL and QR, more strongly in the neighboring epidermal cells (dorsal hyp7 cells, ventral P cells and lateral V cells), and in dorsal and ventral body muscle cells.

The protein resides in the endoplasmic reticulum membrane. In terms of biological role, C-mannosyltransferase that mediates C-mannosylation of tryptophan residues on target proteins such as unc-5 and mig-21. Mediates the attachment of alpha-mannose in C-C linkage to the C2 of the indole ring of tryptophan. C-mannosylation takes place in the endoplasmic reticulum and frequently found in thrombospondin (TSP) type-1 repeats and in the WSXWS motif of type I cytokine receptors. Required to orient neuroblasts QL and QR correctly on the anterior/posterior (A/P) axis: QL and QR are born in the same A/P position, but polarize and migrate left/right asymmetrically, QL migrates toward the posterior and QR migrates toward the anterior. Required with unc-40 to express mab-5 correctly in the Q cell descendants. The protein is C-mannosyltransferase dpy-19 (dpy-19) of Caenorhabditis elegans.